We begin with the raw amino-acid sequence, 129 residues long: Large ribosomal subunit protein bL20 (129 aa).

The protein belongs to the bacterial ribosomal protein bL20 family.

In terms of biological role, binds directly to 23S ribosomal RNA and is necessary for the in vitro assembly process of the 50S ribosomal subunit. It is not involved in the protein synthesizing functions of that subunit. The polypeptide is Large ribosomal subunit protein bL20 (Mycobacterium tuberculosis (strain ATCC 25177 / H37Ra)).